A 93-amino-acid chain; its full sequence is MMSKMGAMFVLLLLFTLASSQQEGDVQARKTHPKREFQRILLRSGRKCNFDKCKGTGVYNCGESCSCEGLHSCRCTYNIGSMKSGCACICTYY.

The N-terminal stretch at 1–20 (MMSKMGAMFVLLLLFTLASS) is a signal peptide. Residues 21-46 (QQEGDVQARKTHPKREFQRILLRSGR) constitute a propeptide that is removed on maturation. Residues glutamate 63 and glutamate 68 each carry the 4-carboxyglutamate modification.

In terms of processing, contains 5 disulfide bonds. In terms of tissue distribution, expressed by the venom duct.

Its subcellular location is the secreted. Alpha-conotoxins act on postsynaptic membranes, they bind to the nicotinic acetylcholine receptors (nAChR) and thus inhibit them. This toxin provokes a nearly complete and slowly reversible inhibition of both the human adult (alpha-1-beta-1-epsilon-delta (CHRNA1-CHRNB1-CHRND-CHRNE)) and human fetal (alpha-1-beta-1-gamma-delta (CHRNA1-CHRNB1-CHRNG-CHRND)) neuromuscular nAChRs. It also reversibly blocks the neuromuscular alpha-7/CHRNA7 nAChR, the alpha-3-beta-2 (CHRNA3-CHRNB2) nAChR, the chimeric alpha-6 or -3/beta-3 or -2 (CHRNA6/CHRNA3-CHRNB2-CHRNB3) nAChR and with a low potency the alpha-4-beta-2 (CHRNA4-CHRNB2) nAChR. In addition, the toxin also inhibits the alpha-9-alpha-10 (CHRNA9-CHRNA10) nAChR with a high potency (IC(50)=187 nM). The protein is Alpha-conotoxin RVIIIA of Conus radiatus (Rayed cone).